We begin with the raw amino-acid sequence, 281 residues long: Probable splicing factor, arginine/serine-rich 2 (281 aa).

Positions 2-72 constitute an RRM 1 domain; that stretch reads VRVYIGRLPN…ERVILEFPRR (71 aa). Composition is skewed to basic and acidic residues over residues 78–97 and 168–190; these read EERS…KGGE and KLQG…DRSR. Disordered stretches follow at residues 78-100 and 168-281; these read EERS…ERQF and KLQG…SASP. The 75-residue stretch at 112–186 folds into the RRM 2 domain; that stretch reads FRLVIDNLST…RKLKCTDETR (75 aa). The segment covering 191–215 has biased composition (basic residues); that stretch reads SRSPRRRSRSRSPTRSRSPPARRRS. Over residues 216–225 the composition is skewed to basic and acidic residues; that stretch reads PGSDRSDRKS. A compositionally biased stretch (basic residues) spans 245–254; that stretch reads RSRSGGRRSR.

The protein belongs to the splicing factor SR family. In terms of processing, extensively phosphorylated on serine residues in the RS domain.

Its subcellular location is the nucleus. Plays a functionally redundant role in spermatogenesis and growth rate control. Required for the development of somatic gonad structures and for progression from larval stage to adulthood. The chain is Probable splicing factor, arginine/serine-rich 2 (rsp-2) from Caenorhabditis elegans.